Consider the following 231-residue polypeptide: 7-cyano-7-deazaguanine synthase (231 aa).

Position 8–18 (8–18 (FSGGQDSTTCL)) interacts with ATP. 4 residues coordinate Zn(2+): Cys188, Cys197, Cys200, and Cys203.

Belongs to the QueC family. Zn(2+) is required as a cofactor.

The enzyme catalyses 7-carboxy-7-deazaguanine + NH4(+) + ATP = 7-cyano-7-deazaguanine + ADP + phosphate + H2O + H(+). It participates in purine metabolism; 7-cyano-7-deazaguanine biosynthesis. Its function is as follows. Catalyzes the ATP-dependent conversion of 7-carboxy-7-deazaguanine (CDG) to 7-cyano-7-deazaguanine (preQ(0)). This Escherichia coli (strain SMS-3-5 / SECEC) protein is 7-cyano-7-deazaguanine synthase.